The following is a 617-amino-acid chain: 1-deoxy-D-xylulose-5-phosphate synthase (617 aa).

Residues His-76 and 117 to 119 each bind thiamine diphosphate; that span reads GHS. Asp-148 contacts Mg(2+). Residues 149–150, Asn-177, Tyr-285, and Glu-366 each bind thiamine diphosphate; that span reads GA. Asn-177 contacts Mg(2+).

This sequence belongs to the transketolase family. DXPS subfamily. Homodimer. The cofactor is Mg(2+). It depends on thiamine diphosphate as a cofactor.

The catalysed reaction is D-glyceraldehyde 3-phosphate + pyruvate + H(+) = 1-deoxy-D-xylulose 5-phosphate + CO2. The protein operates within metabolic intermediate biosynthesis; 1-deoxy-D-xylulose 5-phosphate biosynthesis; 1-deoxy-D-xylulose 5-phosphate from D-glyceraldehyde 3-phosphate and pyruvate: step 1/1. Catalyzes the acyloin condensation reaction between C atoms 2 and 3 of pyruvate and glyceraldehyde 3-phosphate to yield 1-deoxy-D-xylulose-5-phosphate (DXP). The chain is 1-deoxy-D-xylulose-5-phosphate synthase from Mannheimia succiniciproducens (strain KCTC 0769BP / MBEL55E).